A 309-amino-acid chain; its full sequence is Short chain dehydrogenase MYCFIDRAFT_6125 (309 aa).

4 residues coordinate NADP(+): isoleucine 43, arginine 67, aspartate 88, and arginine 150. Serine 168 acts as the Proton donor in catalysis. NADP(+) contacts are provided by tyrosine 182, lysine 186, valine 215, and serine 217. The active-site Proton acceptor is tyrosine 182. Lysine 186 functions as the Lowers pKa of active site Tyr in the catalytic mechanism.

The protein belongs to the short-chain dehydrogenases/reductases (SDR) family.

The protein operates within secondary metabolite biosynthesis. Short chain dehydrogenase; part of the gene cluster that mediates the biosynthesis of an emodin derivative that may be involved in black Sigatoka disease of banana. The pathway begins with the synthesis of atrochrysone thioester by the polyketide synthase PKS8-1. The atrochrysone carboxyl ACP thioesterase MYCFIDRAFT_190111 then breaks the thioester bond and releases the atrochrysone carboxylic acid from PKS8-1. The decarboxylase MYCFIDRAFT_34057 then catalyzes the concerted decarboxylation-elimination required to convert atochrysone carboxylic acid into emodin anthrone, which is further oxidized to emodin by the anthrone oxygenase MYCFIDRAFT_34418. The functions of the other tailoring enzymes as well as the final product of the cluster have still to be identified. The chain is Short chain dehydrogenase MYCFIDRAFT_6125 from Pseudocercospora fijiensis (strain CIRAD86) (Black leaf streak disease fungus).